We begin with the raw amino-acid sequence, 243 residues long: Protein S40-7 (243 aa).

2 disordered regions span residues 1–68 (MNKN…KSGL) and 107–143 (SSTASSSSSSGGGASAGSSSSARAIPTAPKPPQERLP). The segment covering 10–20 (SSPSSLATISD) has biased composition (polar residues). The segment covering 22–32 (ADGELNEDDIF) has biased composition (acidic residues). A compositionally biased stretch (polar residues) spans 47–67 (PVSSPAKQQTPARQLQRSKSG).

This sequence belongs to the senescence regulator S40 family.

Its subcellular location is the cytoplasm. This is Protein S40-7 from Arabidopsis thaliana (Mouse-ear cress).